Consider the following 469-residue polypeptide: UDP-N-acetylmuramate--L-alanine ligase (469 aa).

Gly112–Thr118 is a binding site for ATP.

The protein belongs to the MurCDEF family.

Its subcellular location is the cytoplasm. The enzyme catalyses UDP-N-acetyl-alpha-D-muramate + L-alanine + ATP = UDP-N-acetyl-alpha-D-muramoyl-L-alanine + ADP + phosphate + H(+). The protein operates within cell wall biogenesis; peptidoglycan biosynthesis. Its function is as follows. Cell wall formation. This is UDP-N-acetylmuramate--L-alanine ligase from Herminiimonas arsenicoxydans.